The following is a 241-amino-acid chain: tRNA (guanine-N(7)-)-methyltransferase (241 aa).

S-adenosyl-L-methionine contacts are provided by Glu76, Glu101, Asp128, and Asp150. The active site involves Asp150. Substrate is bound by residues Lys154, Asp186, and Thr219–Glu222.

Belongs to the class I-like SAM-binding methyltransferase superfamily. TrmB family.

The enzyme catalyses guanosine(46) in tRNA + S-adenosyl-L-methionine = N(7)-methylguanosine(46) in tRNA + S-adenosyl-L-homocysteine. It participates in tRNA modification; N(7)-methylguanine-tRNA biosynthesis. Its function is as follows. Catalyzes the formation of N(7)-methylguanine at position 46 (m7G46) in tRNA. This is tRNA (guanine-N(7)-)-methyltransferase from Cereibacter sphaeroides (strain ATCC 17023 / DSM 158 / JCM 6121 / CCUG 31486 / LMG 2827 / NBRC 12203 / NCIMB 8253 / ATH 2.4.1.) (Rhodobacter sphaeroides).